The primary structure comprises 260 residues: LOB domain-containing protein 6 (260 aa).

The region spanning 32–133 (SPCAACKFLR…QDLARAKYEL (102 aa)) is the LOB domain.

Belongs to the LOB domain-containing protein family. Interacts with RS2. In terms of tissue distribution, expressed in leaves, leaf primordia, immature ears, immature tassels, whole ovules, silk and husk leaves. Found on the adaxial side of organs.

It localises to the nucleus. Promotes the switch from proliferation to differentiation in the embryo sac. Negative regulator of cell proliferation in the adaxial side of leaves. Regulates the formation of a symmetric lamina and the establishment of venation. Interacts directly with RS2 (rough sheath 2) to repress some knox homeobox genes. The polypeptide is LOB domain-containing protein 6 (LBD6) (Zea mays (Maize)).